The sequence spans 568 residues: MLRLARKGLQTAVVRSYAKDVKFGAEGRQAMLVGVNLLADAVSVTMGPKGRNVIIEQSWGSPKITKDGVTVAKSIDLKDKYQNLGAKLIQDVANKANEEAGDGTTCATVLARAIAKEGFESIRQGGNAVEIRRGVMNAVEVVVAELKKISKKVTTPEEIAQVATISANGDTVVGNLISDAMKKVGTTGVITVKDGKTLNDELELIEGMKFDRGYISPYFITSAKGAKVEYEKALVLLSEKKISQVQDIVPALELANKLRRPLVIIAEDVDGEALTTLVLNRLKVGLQVVAIKAPGFGDNRKNTLKDMGIATGATIFGDDSNLIKIEDITANDLGEVDEVTITKDDTLLLRGRGDQTEIEKRIEHITDEIEQSTSDYEKEKLNERLAKLSKGVAVLKIGGGSEVEVGEKKDRVTDALCATRAAVEEGIVPGGGVALLRSLTALKNYKAANEDQQIGVNIVKKALTQPIATIVKNAGLEPSSIIDEVTGNSNTSYGYDALNGKFVDMFEAGIIDPTKVVRTALQDASGVASLLATTECVVTEIPKEEAVGGPAGGMGGMGGMGGMGGMGF.

The protein belongs to the chaperonin (HSP60) family.

Its subcellular location is the mitochondrion matrix. Implicated in mitochondrial protein import and macromolecular assembly. May facilitate the correct folding of imported proteins. May also prevent misfolding and promote the refolding and proper assembly of unfolded polypeptides generated under stress conditions in the mitochondrial matrix. The protein is Chaperonin homolog Hsp-60, mitochondrial (hsp-60) of Caenorhabditis elegans.